The following is a 518-amino-acid chain: Serine incorporator 4 (518 aa).

A run of 10 helical transmembrane segments spans residues 59 to 79, 122 to 142, 153 to 173, 184 to 204, 222 to 242, 259 to 279, 286 to 306, 338 to 357, 427 to 447, and 470 to 490; these read CSRLFYILLHVGASAICCLLL, VCAGTATFHLLQAVLLVHLHS, SFWLLKLLFLLGLCAIAFCIP, IGICGGFAFILLQLVLITAFA, FLAVLLATLGFYSMAGVGAVL, LLSLHLCFCGLISFLSIAPCI, SGLLQASVISCYIMYLTFSAL, ISLAMLSASIMYACVLFACN, AFHFVFFLASLYVMVTLTNWF, and VASCWACVLLYLGLLLAPLCW.

This sequence belongs to the TDE1 family.

It localises to the membrane. Its function is as follows. Incorporates a polar amino acid serine into membranes and facilitates the synthesis of two serine-derived lipids, phosphatidylserine and sphingolipids. The chain is Serine incorporator 4 (SERINC4) from Homo sapiens (Human).